The sequence spans 467 residues: Nuclear distribution protein nudF (467 aa).

The LisH domain maps to 9-41 (QAEELHKSIIAYLASVNLTESSAALRAELGDSV). Positions 60-87 (TSVVRLQKKIMDLESRCAALQSELDSAT) form a coiled coil. 8 WD repeats span residues 113–154 (GHRN…RTVK), 156–196 (HTKA…KNIR), 200–247 (GHDH…CVKT), 250–289 (GHVDWVRAVAPSIDGRFLLAAGDDRIPRLWDLSSAETKST), 292–352 (GHEH…IKTL), 354–393 (GHDNWVRALAFHPGGKHLLSVADDKTIRCWDLTQECKCVR), 398–428 (AHGHFVTCLRWAPPLIKDGGANGEAETNGTP), and 429–466 (AATSTTNGVRPDPNVATKISIRCVIATGSVDQKVRIFA). Residues 417–439 (GANGEAETNGTPAATSTTNGVRP) are disordered. A compositionally biased stretch (polar residues) spans 422-436 (AETNGTPAATSTTNG).

The protein belongs to the WD repeat LIS1/nudF family. Self-associates. Interacts with nudE and dynein.

Its subcellular location is the cytoplasm. The protein resides in the cytoskeleton. It is found in the spindle pole. Functionally, positively regulates the activity of the minus-end directed microtubule motor protein dynein. May enhance dynein-mediated microtubule sliding by targeting dynein to the microtubule plus end. Required for nuclear migration during vegetative growth as well as development. Required for retrograde early endosome (EE) transport from the hyphal tip. Required for localization of dynein to the mitotic spindle poles. Recruits additional proteins to the dynein complex at SPBs. The chain is Nuclear distribution protein nudF from Aspergillus fumigatus (strain CBS 144.89 / FGSC A1163 / CEA10) (Neosartorya fumigata).